We begin with the raw amino-acid sequence, 496 residues long: Beta-N-acetylhexosaminidase (496 aa).

The active-site Proton donor is glutamate 298.

This sequence belongs to the glycosyl hydrolase 20 family.

It carries out the reaction Hydrolysis of terminal non-reducing N-acetyl-D-hexosamine residues in N-acetyl-beta-D-hexosaminides.. The protein operates within glycan degradation; chitin degradation. Catalyzes the cleavage of beta-N-acetylglucosaminides and beta-N-acetylgalactosaminides. Also catalyzes the hydrolysis of N-acetylchitooligomers. May be involved in chitin degradation. It is not able to cleave beta-glucosides. The chain is Beta-N-acetylhexosaminidase (hex20) from Cellulomonas fimi.